The following is a 76-amino-acid chain: Large ribosomal subunit protein bL31 (76 aa).

Zn(2+) contacts are provided by Cys-16, Cys-18, Cys-37, and Cys-40.

Belongs to the bacterial ribosomal protein bL31 family. Type A subfamily. As to quaternary structure, part of the 50S ribosomal subunit. Requires Zn(2+) as cofactor.

Its function is as follows. Binds the 23S rRNA. The polypeptide is Large ribosomal subunit protein bL31 (Solibacter usitatus (strain Ellin6076)).